The following is a 650-amino-acid chain: XK-related protein 4 (650 aa).

Positions 1 to 15 (MAAKSDGRLKMKKSS) are enriched in basic and acidic residues. The tract at residues 1-44 (MAAKSDGRLKMKKSSDVAFTPLQNSDHSGSVQGLAPGLPSGSGA) is disordered. Polar residues predominate over residues 21–31 (PLQNSDHSGSV). A run of 2 helical transmembrane segments spans residues 114–134 (WILA…WLAV) and 144–164 (WFGL…VFSF). Serine 200 bears the Phosphoserine mark. Residues 200–238 (SAAGEGEARPSTPQRQASNASKSNIAAANSGSNSSGATR) form a disordered region. Low complexity predominate over residues 216 to 238 (ASNASKSNIAAANSGSNSSGATR). 8 helical membrane-spanning segments follow: residues 248-268 (CSFC…GQIW), 306-326 (HLLA…CIIV), 331-351 (LQAL…WALA), 365-385 (KPIS…TIAA), 396-418 (VFQL…WIVH), 428-448 (WEEI…WFNV), 457-477 (LFIY…LWYL), and 487-507 (FAIP…VFML).

The protein belongs to the XK family. In terms of assembly, homodimer; homodimerization takes place upon caspase cleavage. Interacts with the processed C-terminus of XRCC4 (protein XRCC4, C-terminus); interaction promotes the phospholipid scramblase activity. Post-translationally, undergoes proteolytic processing by caspase-3 (CASP3), caspase-6 (CASP6) and caspase-7 (CASP7) to generate the XK-related protein 4, processed form, leading to its activation.

It is found in the cell membrane. The catalysed reaction is a 1,2-diacyl-sn-glycero-3-phospho-L-serine(in) = a 1,2-diacyl-sn-glycero-3-phospho-L-serine(out). Its activity is regulated as follows. Phospholipid scramblase activity is activated upon caspase cleavage to generate the XK-related protein 4, processed form. Does not act prior the onset of apoptosis. With respect to regulation, homodimerizes upon caspase cleavage. Phospholipid scramblase activity is activated following interaction with the processed C-terminus of XRCC4 (protein XRCC4, C-terminus). Its function is as follows. Phospholipid scramblase that promotes phosphatidylserine exposure on apoptotic cell surface. Phosphatidylserine is a specific marker only present at the surface of apoptotic cells and acts as a specific signal for engulfment. This is XK-related protein 4 from Homo sapiens (Human).